The sequence spans 388 residues: Formate-dependent phosphoribosylglycinamide formyltransferase (388 aa).

N(1)-(5-phospho-beta-D-ribosyl)glycinamide is bound by residues 11 to 12 (EL) and Glu-71. Residues Arg-103, Lys-144, 149–154 (SSGKGQ), 184–187 (EEFI), and Glu-192 contribute to the ATP site. The ATP-grasp domain maps to 108–300 (DLAAKELGLK…EFELHLRAVL (193 aa)). Residues Glu-257 and Glu-270 each coordinate Mg(2+). N(1)-(5-phospho-beta-D-ribosyl)glycinamide-binding positions include Asp-277, Lys-349, and 356 to 357 (RR).

It belongs to the PurK/PurT family. As to quaternary structure, homodimer.

It carries out the reaction N(1)-(5-phospho-beta-D-ribosyl)glycinamide + formate + ATP = N(2)-formyl-N(1)-(5-phospho-beta-D-ribosyl)glycinamide + ADP + phosphate + H(+). It participates in purine metabolism; IMP biosynthesis via de novo pathway; N(2)-formyl-N(1)-(5-phospho-D-ribosyl)glycinamide from N(1)-(5-phospho-D-ribosyl)glycinamide (formate route): step 1/1. In terms of biological role, involved in the de novo purine biosynthesis. Catalyzes the transfer of formate to 5-phospho-ribosyl-glycinamide (GAR), producing 5-phospho-ribosyl-N-formylglycinamide (FGAR). Formate is provided by PurU via hydrolysis of 10-formyl-tetrahydrofolate. This chain is Formate-dependent phosphoribosylglycinamide formyltransferase, found in Bacteroides thetaiotaomicron (strain ATCC 29148 / DSM 2079 / JCM 5827 / CCUG 10774 / NCTC 10582 / VPI-5482 / E50).